The following is a 69-amino-acid chain: Cytochrome c oxidase subunit 8A, mitochondrial (69 aa).

A mitochondrion-targeting transit peptide spans 1-25 (MSVLTPLLLRGLTGPARRLPVPRAQ). The short motif at 2–19 (SVLTPLLLRGLTGPARRL) is the SIFI-degron element. Residues 26 to 36 (IHSKPPREQLG) are Mitochondrial matrix-facing. Residues 37-60 (TMDIAIGLTSCFLCFLLPSGWVLS) form a helical membrane-spanning segment. Residues 61–69 (HMENYKKRE) are Mitochondrial intermembrane-facing.

Belongs to the cytochrome c oxidase VIII family. In terms of assembly, component of the cytochrome c oxidase (complex IV, CIV), a multisubunit enzyme composed of 14 subunits. The complex is composed of a catalytic core of 3 subunits MT-CO1, MT-CO2 and MT-CO3, encoded in the mitochondrial DNA, and 11 supernumerary subunits COX4I1 (or COX4I2), COX5A, COX5B, COX6A2 (or COX6A1), COX6B1 (or COX6B2), COX6C, COX7A1 (or COX7A2), COX7B, COX7C, COX8B and NDUFA4, which are encoded in the nuclear genome. The complex exists as a monomer or a dimer and forms supercomplexes (SCs) in the inner mitochondrial membrane with NADH-ubiquinone oxidoreductase (complex I, CI) and ubiquinol-cytochrome c oxidoreductase (cytochrome b-c1 complex, complex III, CIII), resulting in different assemblies (supercomplex SCI(1)III(2)IV(1) and megacomplex MCI(2)III(2)IV(2)). In terms of processing, in response to mitochondrial stress, the precursor protein is ubiquitinated by the SIFI complex in the cytoplasm before mitochondrial import, leading to its degradation. Within the SIFI complex, UBR4 initiates ubiquitin chain that are further elongated or branched by KCMF1.

The protein localises to the mitochondrion inner membrane. It participates in energy metabolism; oxidative phosphorylation. Functionally, component of the cytochrome c oxidase, the last enzyme in the mitochondrial electron transport chain which drives oxidative phosphorylation. The respiratory chain contains 3 multisubunit complexes succinate dehydrogenase (complex II, CII), ubiquinol-cytochrome c oxidoreductase (cytochrome b-c1 complex, complex III, CIII) and cytochrome c oxidase (complex IV, CIV), that cooperate to transfer electrons derived from NADH and succinate to molecular oxygen, creating an electrochemical gradient over the inner membrane that drives transmembrane transport and the ATP synthase. Cytochrome c oxidase is the component of the respiratory chain that catalyzes the reduction of oxygen to water. Electrons originating from reduced cytochrome c in the intermembrane space (IMS) are transferred via the dinuclear copper A center (CU(A)) of subunit 2 and heme A of subunit 1 to the active site in subunit 1, a binuclear center (BNC) formed by heme A3 and copper B (CU(B)). The BNC reduces molecular oxygen to 2 water molecules using 4 electrons from cytochrome c in the IMS and 4 protons from the mitochondrial matrix. This Bos taurus (Bovine) protein is Cytochrome c oxidase subunit 8A, mitochondrial (COX8A).